Reading from the N-terminus, the 298-residue chain is ADP/ATP translocase 3 (298 aa).

N-acetylmethionine is present on Met1. Topologically, residues Met1–Ser7 are mitochondrial intermembrane. An N-acetylthreonine; in ADP/ATP translocase 3, N-terminally processed modification is found at Thr2. A Solcar 1 repeat occupies Ile6–Ile98. The chain crosses the membrane as a helical span at residues Phe8–Gln37. At Val38–Asn74 the chain is on the mitochondrial matrix side. An N6,N6,N6-trimethyllysine modification is found at Lys52. A helical membrane pass occupies residues Leu75 to Phe99. The ADP site is built by Arg80 and Lys92. At Leu100 to Phe109 the chain is on the mitochondrial intermembrane side. An N6-acetyllysine modification is found at Lys105. Residues Trp110 to Phe130 form a helical membrane-spanning segment. Solcar repeat units lie at residues Arg111–Met201 and Val212–Val297. Residues Val131 to Asn178 lie on the Mitochondrial matrix side of the membrane. The chain crosses the membrane as a helical span at residues Val179–Lys199. Residues Gly200–Ile210 lie on the Mitochondrial intermembrane side of the membrane. The helical transmembrane segment at Val211–Phe231 threads the bilayer. Residues Asp232 to Gly273 are Mitochondrial matrix-facing. An ADP-binding site is contributed by Arg235. Residues Arg235–Met240 form an important for transport activity region. The short motif at Arg235–Met240 is the Nucleotide carrier signature motif element. Lys268 is subject to N6-acetyllysine. Residues Ala274 to Tyr291 form a helical membrane-spanning segment. Topologically, residues Asp292–Ile298 are mitochondrial intermembrane.

Belongs to the mitochondrial carrier (TC 2.A.29) family. Monomer. Found in a complex with ARL2, ARL2BP and SLC25A6/ANT3. Trimethylated by ANTKMT at Lys-52.

Its subcellular location is the mitochondrion inner membrane. It is found in the membrane. It carries out the reaction ADP(in) + ATP(out) = ADP(out) + ATP(in). The catalysed reaction is H(+)(in) = H(+)(out). The matrix-open state (m-state) is inhibited by the membrane-permeable bongkrekic acid (BKA). The cytoplasmic-open state (c-state) is inhibited by the membrane-impermeable toxic inhibitor carboxyatractyloside (CATR). Proton transporter activity is inhibited by ADP:ATP antiporter activity. In terms of biological role, ADP:ATP antiporter that mediates import of ADP into the mitochondrial matrix for ATP synthesis, and export of ATP out to fuel the cell. Cycles between the cytoplasmic-open state (c-state) and the matrix-open state (m-state): operates by the alternating access mechanism with a single substrate-binding site intermittently exposed to either the cytosolic (c-state) or matrix (m-state) side of the inner mitochondrial membrane. In addition to its ADP:ATP antiporter activity, also involved in mitochondrial uncoupling and mitochondrial permeability transition pore (mPTP) activity. Plays a role in mitochondrial uncoupling by acting as a proton transporter: proton transport uncouples the proton flows via the electron transport chain and ATP synthase to reduce the efficiency of ATP production and cause mitochondrial thermogenesis. Proton transporter activity is inhibited by ADP:ATP antiporter activity, suggesting that SLC25A6/ANT3 acts as a master regulator of mitochondrial energy output by maintaining a delicate balance between ATP production (ADP:ATP antiporter activity) and thermogenesis (proton transporter activity). Proton transporter activity requires free fatty acids as cofactor, but does not transport it. Also plays a key role in mPTP opening, a non-specific pore that enables free passage of the mitochondrial membranes to solutes of up to 1.5 kDa, and which contributes to cell death. It is however unclear if SLC25A6/ANT3 constitutes a pore-forming component of mPTP or regulates it. This is ADP/ATP translocase 3 from Bos taurus (Bovine).